Here is a 357-residue protein sequence, read N- to C-terminus: tRNA/tmRNA (uracil-C(5))-methyltransferase (357 aa).

S-adenosyl-L-methionine contacts are provided by Gln180, Tyr209, Asn214, Glu230, and Asp290. The active-site Nucleophile is the Cys315. The active-site Proton acceptor is Glu349.

Belongs to the class I-like SAM-binding methyltransferase superfamily. RNA M5U methyltransferase family. TrmA subfamily.

The catalysed reaction is uridine(54) in tRNA + S-adenosyl-L-methionine = 5-methyluridine(54) in tRNA + S-adenosyl-L-homocysteine + H(+). The enzyme catalyses uridine(341) in tmRNA + S-adenosyl-L-methionine = 5-methyluridine(341) in tmRNA + S-adenosyl-L-homocysteine + H(+). Functionally, dual-specificity methyltransferase that catalyzes the formation of 5-methyluridine at position 54 (m5U54) in all tRNAs, and that of position 341 (m5U341) in tmRNA (transfer-mRNA). This Campylobacter jejuni subsp. jejuni serotype O:2 (strain ATCC 700819 / NCTC 11168) protein is tRNA/tmRNA (uracil-C(5))-methyltransferase.